A 79-amino-acid polypeptide reads, in one-letter code: Hematopoietic cell signal transducer (79 aa).

The N-terminal stretch at M1–A18 is a signal peptide. Residues Q19–P34 are Extracellular-facing. Residues L35–F55 form a helical membrane-spanning segment. Topologically, residues L56–G79 are cytoplasmic. A Phosphotyrosine modification is found at Y72. A GRB2 binding site region spans residues Y72–N74. Positions Y72 to M75 are PIK3R1 binding site.

Belongs to the DAP10 family. As to quaternary structure, homodimer; Disulfide-linked. Heterohexamer composed of four subunits of HCST/DAP10 and two subunits of KLRK1. Interacts (via transmembrane domain) with KLRK1 (via transmembrane domain); the interaction is required for KLRK1 NK cell surface and induces NK cell-mediated cytotoxicity. Interacts with PIK3R1 and GRB2. Interacts with CLEC5A. Forms an CLEC5A/TYROBP/HCST trimolecular complex depending almost solely on TYROBP. Interacts with CD300H. In terms of processing, phosphorylated; PIK3R1 and GRB2 associate specifically with tyrosine-phosphorylated HCST. O-glycosylated.

The protein localises to the membrane. Functionally, transmembrane adapter protein which associates with KLRK1 to form an activation receptor KLRK1-HCST in lymphoid and myeloid cells; this receptor plays a major role in triggering cytotoxicity against target cells expressing cell surface ligands such as MHC class I chain-related MICA and MICB, and UL16-binding proteins (ULBPs); these ligands are up-regulated by stress conditions and pathological state such as viral infection and tumor transformation. Functions as a docking site for PI3-kinase PIK3R1 and GRB2. Interaction of ULBPs with KLRK1-HCST triggers calcium mobilization and activation of the PIK3R1, MAP2K/ERK, and JAK2/STAT5 signaling pathways. Both PIK3R1 and GRB2 are required for full KLRK1-HCST-mediated activation and ultimate killing of target cells. In NK cells, KLRK1-HCST signaling directly induces cytotoxicity and enhances cytokine production initiated via DAP12/TYROBP-associated receptors. In T-cells, it provides primarily costimulation for TCR-induced signals. KLRK1-HCST receptor plays a role in immune surveillance against tumors and is required for cytolysis of tumors cells; indeed, melanoma cells that do not express KLRK1 ligands escape from immune surveillance mediated by NK cells. The chain is Hematopoietic cell signal transducer (HCST) from Macaca mulatta (Rhesus macaque).